Reading from the N-terminus, the 393-residue chain is MTTPGEDHAGSFYLPRLEYSTLPMAVDRGVGWKTLRDAGPVVFMNGWYYLTRREDVLAALRNPKVFSSRKALQPPGNPLPVVPLAFDPPEHTRYRRILQPYFSPAALSKALPSLRRHTVAMIDAIAGRGECEAMADLANLFPFQLFLVLYGLPLEDRDRLIGWKDAVIAMSDRPHPTEADVAAARELLEYLTAMVAERRRNPGPDVLSQVQIGEDPLSEIEVLGLSHLLILAGLDTVTAAVGFSLLELARRPQLRAMLRDNPKQIRVFIEEIVRLEPSAPVAPRVTTEPVTVGGMTLPAGSPVRLCMAAVNRDGSDAMSTDELVMDGKVHRHWGFGGGPHRCLGSHLARLELTLLVGEWLNQIPDFELAPDYAPEIRFPSKSFALKNLPLRWS.

Heme is bound at residue cysteine 342.

The protein belongs to the cytochrome P450 family. The cofactor is heme.

The protein is Putative cytochrome P450 143 (cyp143) of Mycobacterium bovis (strain ATCC BAA-935 / AF2122/97).